The sequence spans 159 residues: MIILGIDPSLVSTGWGVISISGSIVNYIDSGVIKTVSKDSLVLKLGNISLMIEKLITRFNPFHVAMEEVFINKNYSSSVTLIQARGAIMSVIGRYNIDFSEYAPNKIKKAIVGAGKAEKHQVQQMVKLLMHIKKAISKDESDALATAYTASVNHQIKII.

Catalysis depends on residues Asp7, Glu67, and Asp139. Mg(2+)-binding residues include Asp7, Glu67, and Asp139.

It belongs to the RuvC family. As to quaternary structure, homodimer which binds Holliday junction (HJ) DNA. The HJ becomes 2-fold symmetrical on binding to RuvC with unstacked arms; it has a different conformation from HJ DNA in complex with RuvA. In the full resolvosome a probable DNA-RuvA(4)-RuvB(12)-RuvC(2) complex forms which resolves the HJ. Requires Mg(2+) as cofactor.

It localises to the cytoplasm. It catalyses the reaction Endonucleolytic cleavage at a junction such as a reciprocal single-stranded crossover between two homologous DNA duplexes (Holliday junction).. The RuvA-RuvB-RuvC complex processes Holliday junction (HJ) DNA during genetic recombination and DNA repair. Endonuclease that resolves HJ intermediates. Cleaves cruciform DNA by making single-stranded nicks across the HJ at symmetrical positions within the homologous arms, yielding a 5'-phosphate and a 3'-hydroxyl group; requires a central core of homology in the junction. The consensus cleavage sequence is 5'-(A/T)TT(C/G)-3'. Cleavage occurs on the 3'-side of the TT dinucleotide at the point of strand exchange. HJ branch migration catalyzed by RuvA-RuvB allows RuvC to scan DNA until it finds its consensus sequence, where it cleaves and resolves the cruciform DNA. The sequence is that of Crossover junction endodeoxyribonuclease RuvC from Orientia tsutsugamushi (strain Ikeda) (Rickettsia tsutsugamushi).